A 498-amino-acid chain; its full sequence is MSDAAVVILAAGAGTRMKSDTPKVLHSLAGRSMLAHSMHAVAGLGPRHLVVVVGKHREQVAPAALQIGEHLGRTVDIAVQEEQRGTGHAVECGLAALPADFHGVVVVTAGDVPLLDTDTLAQLIATHDAESADVTLLTTTMADPTGYGRILRTQDGEVIGIVEQADATESQRAITEVNAAVYAFGVGALRSALSRLKTDNAQGELYLTDAIALVRGDGGTVRAVHVDDPALVAGVNDRVQLADLGAELNRRVVAAHQRAGVTIVDPATTWIDVDVTIGRDTVVRPGTQLLGATAVGGRCEIGPDTTLTDVTVGDGAQVIRTHGTSSQIGAGAVVGPFTYLRPGTALGADGKLGAFVETKNATIGTGTKVPHLTYVGDADIGEHSNIGASSVFVNYDGETKSRTTIGSHVRTGSDTMFVAPVTVGDGAYTGAGTVIRDDVPPGALAVSAGPQRNIEGWVARKRPGSKAAAAAEAAAADGDTAAADRAAATAKPAPATGE.

Residues 1–238 form a pyrophosphorylase region; that stretch reads MSDAAVVILA…PALVAGVNDR (238 aa). UDP-N-acetyl-alpha-D-glucosamine is bound by residues 9-12, K23, Q80, and 85-86; these read LAAG and GT. Residue D111 coordinates Mg(2+). 4 residues coordinate UDP-N-acetyl-alpha-D-glucosamine: G148, E163, N178, and N236. N236 serves as a coordination point for Mg(2+). The interval 239–259 is linker; the sequence is VQLADLGAELNRRVVAAHQRA. Residues 260 to 498 are N-acetyltransferase; that stretch reads GVTIVDPATT…TAKPAPATGE (239 aa). UDP-N-acetyl-alpha-D-glucosamine-binding residues include R341 and K359. The active-site Proton acceptor is H371. UDP-N-acetyl-alpha-D-glucosamine is bound by residues Y374 and N385. Residues A388, 394–395, S413, and A431 each bind acetyl-CoA; that span reads NY. A disordered region spans residues 470–498; that stretch reads AAEAAAADGDTAAADRAAATAKPAPATGE.

It in the N-terminal section; belongs to the N-acetylglucosamine-1-phosphate uridyltransferase family. The protein in the C-terminal section; belongs to the transferase hexapeptide repeat family. As to quaternary structure, homotrimer. It depends on Mg(2+) as a cofactor.

It is found in the cytoplasm. It carries out the reaction alpha-D-glucosamine 1-phosphate + acetyl-CoA = N-acetyl-alpha-D-glucosamine 1-phosphate + CoA + H(+). The enzyme catalyses N-acetyl-alpha-D-glucosamine 1-phosphate + UTP + H(+) = UDP-N-acetyl-alpha-D-glucosamine + diphosphate. The protein operates within nucleotide-sugar biosynthesis; UDP-N-acetyl-alpha-D-glucosamine biosynthesis; N-acetyl-alpha-D-glucosamine 1-phosphate from alpha-D-glucosamine 6-phosphate (route II): step 2/2. It participates in nucleotide-sugar biosynthesis; UDP-N-acetyl-alpha-D-glucosamine biosynthesis; UDP-N-acetyl-alpha-D-glucosamine from N-acetyl-alpha-D-glucosamine 1-phosphate: step 1/1. Its pathway is bacterial outer membrane biogenesis; LPS lipid A biosynthesis. In terms of biological role, catalyzes the last two sequential reactions in the de novo biosynthetic pathway for UDP-N-acetylglucosamine (UDP-GlcNAc). The C-terminal domain catalyzes the transfer of acetyl group from acetyl coenzyme A to glucosamine-1-phosphate (GlcN-1-P) to produce N-acetylglucosamine-1-phosphate (GlcNAc-1-P), which is converted into UDP-GlcNAc by the transfer of uridine 5-monophosphate (from uridine 5-triphosphate), a reaction catalyzed by the N-terminal domain. In Mycolicibacterium gilvum (strain PYR-GCK) (Mycobacterium gilvum (strain PYR-GCK)), this protein is Bifunctional protein GlmU.